The following is a 365-amino-acid chain: Histidinol-phosphate aminotransferase (365 aa).

Residue Lys220 is modified to N6-(pyridoxal phosphate)lysine.

This sequence belongs to the class-II pyridoxal-phosphate-dependent aminotransferase family. Histidinol-phosphate aminotransferase subfamily. In terms of assembly, homodimer. The cofactor is pyridoxal 5'-phosphate.

It catalyses the reaction L-histidinol phosphate + 2-oxoglutarate = 3-(imidazol-4-yl)-2-oxopropyl phosphate + L-glutamate. It functions in the pathway amino-acid biosynthesis; L-histidine biosynthesis; L-histidine from 5-phospho-alpha-D-ribose 1-diphosphate: step 7/9. In Neisseria meningitidis serogroup A / serotype 4A (strain DSM 15465 / Z2491), this protein is Histidinol-phosphate aminotransferase.